The primary structure comprises 195 residues: uncharacterized protein (195 aa).

The disordered stretch occupies residues 143 to 195 (NKLIETINTNRTNNTDNKSTKSKKQTETKKSLRTNKIVKQPINKSKKNIREEY). Residues 148–159 (TINTNRTNNTDN) show a composition bias toward low complexity.

This is an uncharacterized protein from Acanthamoeba polyphaga (Amoeba).